The sequence spans 314 residues: Aspartate carbamoyltransferase catalytic subunit (314 aa).

Positions 55 and 56 each coordinate carbamoyl phosphate. K83 lines the L-aspartate pocket. Carbamoyl phosphate-binding residues include R105, H134, and Q137. 2 residues coordinate L-aspartate: R167 and R221. Positions 262 and 263 each coordinate carbamoyl phosphate.

Belongs to the aspartate/ornithine carbamoyltransferase superfamily. ATCase family. Heterododecamer (2C3:3R2) of six catalytic PyrB chains organized as two trimers (C3), and six regulatory PyrI chains organized as three dimers (R2).

It carries out the reaction carbamoyl phosphate + L-aspartate = N-carbamoyl-L-aspartate + phosphate + H(+). Its pathway is pyrimidine metabolism; UMP biosynthesis via de novo pathway; (S)-dihydroorotate from bicarbonate: step 2/3. Its function is as follows. Catalyzes the condensation of carbamoyl phosphate and aspartate to form carbamoyl aspartate and inorganic phosphate, the committed step in the de novo pyrimidine nucleotide biosynthesis pathway. The sequence is that of Aspartate carbamoyltransferase catalytic subunit from Corynebacterium urealyticum (strain ATCC 43042 / DSM 7109).